The primary structure comprises 398 residues: 1-deoxy-D-xylulose 5-phosphate reductoisomerase (398 aa).

NADPH contacts are provided by Thr-10, Gly-11, Ser-12, Ile-13, Gly-36, Lys-37, Asn-38, and Asn-124. Position 125 (Lys-125) interacts with 1-deoxy-D-xylulose 5-phosphate. Position 126 (Glu-126) interacts with NADPH. Asp-150 is a binding site for Mn(2+). Ser-151, Glu-152, Ser-186, and His-209 together coordinate 1-deoxy-D-xylulose 5-phosphate. Residue Glu-152 coordinates Mn(2+). Gly-215 is a binding site for NADPH. Residues Ser-222, Asn-227, Lys-228, and Glu-231 each coordinate 1-deoxy-D-xylulose 5-phosphate. Glu-231 lines the Mn(2+) pocket.

This sequence belongs to the DXR family. Homodimer. The cofactor is Mg(2+). Mn(2+) serves as cofactor.

The catalysed reaction is 2-C-methyl-D-erythritol 4-phosphate + NADP(+) = 1-deoxy-D-xylulose 5-phosphate + NADPH + H(+). Its pathway is isoprenoid biosynthesis; isopentenyl diphosphate biosynthesis via DXP pathway; isopentenyl diphosphate from 1-deoxy-D-xylulose 5-phosphate: step 1/6. Its function is as follows. Catalyzes the NADPH-dependent rearrangement and reduction of 1-deoxy-D-xylulose-5-phosphate (DXP) to 2-C-methyl-D-erythritol 4-phosphate (MEP). In Shigella flexneri, this protein is 1-deoxy-D-xylulose 5-phosphate reductoisomerase.